A 1295-amino-acid polypeptide reads, in one-letter code: Phosphoribosylformylglycinamidine synthase (1295 aa).

The interval 302 to 327 (APFSGAATGSGGEIRDEGATGRGSKP) is disordered. ATP contacts are provided by residues 306-317 (GAATGSGGEIRD) and A677. Positions 678, 717, 721, and 884 each coordinate Mg(2+). S886 contacts ATP. Residues 1042–1295 (MAILREQGVN…MFRNARVYLG (254 aa)) form the Glutamine amidotransferase type-1 domain. C1135 functions as the Nucleophile in the catalytic mechanism. Catalysis depends on residues H1260 and E1262.

This sequence in the N-terminal section; belongs to the FGAMS family. In terms of assembly, monomer.

The protein localises to the cytoplasm. The enzyme catalyses N(2)-formyl-N(1)-(5-phospho-beta-D-ribosyl)glycinamide + L-glutamine + ATP + H2O = 2-formamido-N(1)-(5-O-phospho-beta-D-ribosyl)acetamidine + L-glutamate + ADP + phosphate + H(+). The protein operates within purine metabolism; IMP biosynthesis via de novo pathway; 5-amino-1-(5-phospho-D-ribosyl)imidazole from N(2)-formyl-N(1)-(5-phospho-D-ribosyl)glycinamide: step 1/2. Its function is as follows. Phosphoribosylformylglycinamidine synthase involved in the purines biosynthetic pathway. Catalyzes the ATP-dependent conversion of formylglycinamide ribonucleotide (FGAR) and glutamine to yield formylglycinamidine ribonucleotide (FGAM) and glutamate. This chain is Phosphoribosylformylglycinamidine synthase, found in Pseudoalteromonas atlantica (strain T6c / ATCC BAA-1087).